Consider the following 246-residue polypeptide: MFQLPILNFSPQQVAGVCETLEESGDIERLGRFLWSLPVAPAACEALNKNESVLRARAIVAFHTGNYRELYHILENHKFTKESHGKLQALWLEAHYQEAEKLRGRPLGPVDKYRVRKKFPLPRTIWDGEQKTHCFKERTRHLLREWYLQDPYPNPSKKRELAQATGLTPTQVGNWFKNRRQRDRAAAAKNRLQQQVLAQGSGRSLQAEEESGGEAGGAASSPAVSLSSKAATSAISITSSDSECDI.

The segment at residues 126 to 186 (WDGEQKTHCF…KNRRQRDRAA (61 aa)) is a DNA-binding region (homeobox). The segment covering 195 to 204 (QVLAQGSGRS) has biased composition (polar residues). The disordered stretch occupies residues 195–246 (QVLAQGSGRSLQAEEESGGEAGGAASSPAVSLSSKAATSAISITSSDSECDI). Residues 217–246 (GAASSPAVSLSSKAATSAISITSSDSECDI) are compositionally biased toward low complexity.

Belongs to the SIX/Sine oculis homeobox family. In terms of tissue distribution, in the developing embryo, expressed in the anterior head-fold, the anterior neural plate and optic vesicle. At later stages expression is maintained in the eye, while brain expression becomes limited. Not expressed in the lens placode.

It localises to the nucleus. Its function is as follows. May be involved in eye development. The polypeptide is Homeobox protein SIX6 (SIX6) (Gallus gallus (Chicken)).